The sequence spans 176 residues: MDLPGPIHEILVLFGGFVLLLGGLGVVLLTNPTFSAFSLGLVLVCISLFYILLNSYFVAVAQLLIYVGAINVLIIFAVMFVNGSEWSKDKNFWTIGDGFTSLVCITIPFSLMTTIPDTSWYGILWTTRSNQIVEQGLINNVQQIGIHLATDFYLPFELISIILLVSLIGAITMARQ.

The next 5 helical transmembrane spans lie at 10-30, 33-53, 60-80, 92-112, and 152-172; these read ILVLFGGFVLLLGGLGVVLLT, TFSAFSLGLVLVCISLFYILL, VAQLLIYVGAINVLIIFAVMF, FWTIGDGFTSLVCITIPFSLM, and FYLPFELISIILLVSLIGAIT.

The protein belongs to the complex I subunit 6 family. NDH is composed of at least 16 different subunits, 5 of which are encoded in the nucleus.

Its subcellular location is the plastid. The protein localises to the chloroplast thylakoid membrane. It carries out the reaction a plastoquinone + NADH + (n+1) H(+)(in) = a plastoquinol + NAD(+) + n H(+)(out). It catalyses the reaction a plastoquinone + NADPH + (n+1) H(+)(in) = a plastoquinol + NADP(+) + n H(+)(out). Functionally, NDH shuttles electrons from NAD(P)H:plastoquinone, via FMN and iron-sulfur (Fe-S) centers, to quinones in the photosynthetic chain and possibly in a chloroplast respiratory chain. The immediate electron acceptor for the enzyme in this species is believed to be plastoquinone. Couples the redox reaction to proton translocation, and thus conserves the redox energy in a proton gradient. This Oryza nivara (Indian wild rice) protein is NAD(P)H-quinone oxidoreductase subunit 6, chloroplastic (ndhG).